Consider the following 101-residue polypeptide: Nucleoid-associated protein Bind_0255 (101 aa).

This sequence belongs to the YbaB/EbfC family. In terms of assembly, homodimer.

The protein resides in the cytoplasm. It is found in the nucleoid. Functionally, binds to DNA and alters its conformation. May be involved in regulation of gene expression, nucleoid organization and DNA protection. The sequence is that of Nucleoid-associated protein Bind_0255 from Beijerinckia indica subsp. indica (strain ATCC 9039 / DSM 1715 / NCIMB 8712).